The following is a 360-amino-acid chain: Peptide chain release factor 1 (360 aa).

At Gln-235 the chain carries N5-methylglutamine. A disordered region spans residues Gln-286–Asn-311.

Belongs to the prokaryotic/mitochondrial release factor family. Post-translationally, methylated by PrmC. Methylation increases the termination efficiency of RF1.

The protein resides in the cytoplasm. Its function is as follows. Peptide chain release factor 1 directs the termination of translation in response to the peptide chain termination codons UAG and UAA. The polypeptide is Peptide chain release factor 1 (Histophilus somni (strain 2336) (Haemophilus somnus)).